A 119-amino-acid polypeptide reads, in one-letter code: Large ribosomal subunit protein uL24 (119 aa).

It belongs to the universal ribosomal protein uL24 family. Part of the 50S ribosomal subunit.

Its function is as follows. One of two assembly initiator proteins, it binds directly to the 5'-end of the 23S rRNA, where it nucleates assembly of the 50S subunit. Functionally, one of the proteins that surrounds the polypeptide exit tunnel on the outside of the subunit. In Sulfurihydrogenibium sp. (strain YO3AOP1), this protein is Large ribosomal subunit protein uL24.